The primary structure comprises 142 residues: Large ribosomal subunit protein uL11 (142 aa).

The protein belongs to the universal ribosomal protein uL11 family. Part of the ribosomal stalk of the 50S ribosomal subunit. Interacts with L10 and the large rRNA to form the base of the stalk. L10 forms an elongated spine to which L12 dimers bind in a sequential fashion forming a multimeric L10(L12)X complex. Post-translationally, one or more lysine residues are methylated.

Forms part of the ribosomal stalk which helps the ribosome interact with GTP-bound translation factors. In Acidithiobacillus ferrooxidans (strain ATCC 23270 / DSM 14882 / CIP 104768 / NCIMB 8455) (Ferrobacillus ferrooxidans (strain ATCC 23270)), this protein is Large ribosomal subunit protein uL11.